Consider the following 476-residue polypeptide: Glycogen synthase (476 aa).

Lys-15 contacts ADP-alpha-D-glucose.

The protein belongs to the glycosyltransferase 1 family. Bacterial/plant glycogen synthase subfamily.

It carries out the reaction [(1-&gt;4)-alpha-D-glucosyl](n) + ADP-alpha-D-glucose = [(1-&gt;4)-alpha-D-glucosyl](n+1) + ADP + H(+). Its pathway is glycan biosynthesis; glycogen biosynthesis. Synthesizes alpha-1,4-glucan chains using ADP-glucose. The polypeptide is Glycogen synthase (Actinobacillus succinogenes (strain ATCC 55618 / DSM 22257 / CCUG 43843 / 130Z)).